We begin with the raw amino-acid sequence, 149 residues long: MKGGKSKGESKKAETKLAVNKKGAAATKGGKKPAKGKEPKDPNKPKRPPSAFFVFMADFREQYKKDHPNNKSVAAVGKACGEEWKSLSEEEKAPYVDRALKKKEEYEITLQAYNKKLEGKDDEEGSDKSKSEVNDEDEDEEDEEDEDDD.

2 stretches are compositionally biased toward basic and acidic residues: residues 1–15 (MKGG…KAET) and 35–44 (KGKEPKDPNK). Disordered stretches follow at residues 1 to 52 (MKGG…PSAF) and 112 to 149 (AYNK…EDDD). Residues 45 to 114 (PKRPPSAFFV…EYEITLQAYN (70 aa)) constitute a DNA-binding region (HMG box). Over residues 134 to 149 (NDEDEDEEDEEDEDDD) the composition is skewed to acidic residues.

Belongs to the HMGB family.

The protein resides in the nucleus. This is HMG1/2-like protein from Vicia faba (Broad bean).